Reading from the N-terminus, the 385-residue chain is POU domain, class 3, transcription factor 2-B (385 aa).

Disordered regions lie at residues 106–136, 149–209, and 351–385; these read LVHP…SSNG, NGMI…TPTS, and EKRM…TSVQ. The segment covering 122–136 has biased composition (polar residues); that stretch reads STGSTHLSSMASSNG. The span at 165-178 shows a compositional bias: basic and acidic residues; sequence LRDSHDDHHGDHGH. Residues 179-196 are compositionally biased toward low complexity; the sequence is QQPSQTQQQQQQHSQLQG. The POU-specific domain occupies 204–278; the sequence is EDTPTSDDLE…LLNKWLEEAD (75 aa). A DNA-binding region (homeobox) is located at residues 296 to 355; that stretch reads KRKKRTSIEVSVKGALESHFLKCPKPAAQEITSLADSLQLEKEVVRVWFCNRRQKEKRMT.

It belongs to the POU transcription factor family. Class-3 subfamily. Expressed in the developing brain and spinal cord. Also found in a restricted region of the auditory vesicle during development. In the adult, expression is restricted to the brain.

The protein resides in the nucleus. Functionally, transcription factor that may be implicated in patterning of the central nervous system during early development. The polypeptide is POU domain, class 3, transcription factor 2-B (pou3f2-b) (Xenopus laevis (African clawed frog)).